A 176-amino-acid polypeptide reads, in one-letter code: Peptide methionine sulfoxide reductase MsrA (176 aa).

The active site involves C10.

This sequence belongs to the MsrA Met sulfoxide reductase family.

It carries out the reaction L-methionyl-[protein] + [thioredoxin]-disulfide + H2O = L-methionyl-(S)-S-oxide-[protein] + [thioredoxin]-dithiol. The catalysed reaction is [thioredoxin]-disulfide + L-methionine + H2O = L-methionine (S)-S-oxide + [thioredoxin]-dithiol. Has an important function as a repair enzyme for proteins that have been inactivated by oxidation. Catalyzes the reversible oxidation-reduction of methionine sulfoxide in proteins to methionine. The polypeptide is Peptide methionine sulfoxide reductase MsrA (Leptospira borgpetersenii serovar Hardjo-bovis (strain JB197)).